Consider the following 439-residue polypeptide: NAD-dependent malic enzyme 1 (439 aa).

Positions 9–84 (TLMIETPSVP…GIRLHTVSDE (76 aa)) constitute an ACT domain. Tyr-112 (proton donor) is an active-site residue. The Proton acceptor role is filled by Lys-167. Positions 209, 210, and 235 each coordinate a divalent metal cation. NAD(+)-binding positions include 268-271 (LGAA), Asn-347, and Asn-373.

This sequence belongs to the malic enzymes family. Mg(2+) serves as cofactor. Mn(2+) is required as a cofactor.

The catalysed reaction is (S)-malate + NAD(+) = pyruvate + CO2 + NADH. It catalyses the reaction oxaloacetate + H(+) = pyruvate + CO2. Functionally, catalyzes the decarboxylation of malate to pyruvate. Is specific for NAD, cannot use NADP. Can also catalyze the decarboxylation of oxaloacetate. Involved in keeping the ATP levels high. This Bacillus subtilis (strain 168) protein is NAD-dependent malic enzyme 1.